The following is a 367-amino-acid chain: Glutamate 5-kinase (367 aa).

Lys-8 is an ATP binding site. Ser-49, Asp-136, and Asn-148 together coordinate substrate. ATP-binding positions include 168–169 and 210–216; these read TD and TGGMATK. The PUA domain maps to 275–353; sequence TGKLLLDAGA…DQIVQILGYE (79 aa).

The protein belongs to the glutamate 5-kinase family.

Its subcellular location is the cytoplasm. The enzyme catalyses L-glutamate + ATP = L-glutamyl 5-phosphate + ADP. Its pathway is amino-acid biosynthesis; L-proline biosynthesis; L-glutamate 5-semialdehyde from L-glutamate: step 1/2. Its function is as follows. Catalyzes the transfer of a phosphate group to glutamate to form L-glutamate 5-phosphate. The sequence is that of Glutamate 5-kinase from Synechococcus elongatus (strain ATCC 33912 / PCC 7942 / FACHB-805) (Anacystis nidulans R2).